The chain runs to 274 residues: Penicillin-insensitive murein endopeptidase (274 aa).

The signal sequence occupies residues 1–19; the sequence is MKKTAIALLAWFVSSASLA. Disulfide bonds link cysteine 44-cysteine 265, cysteine 187-cysteine 235, and cysteine 216-cysteine 223. Zn(2+) contacts are provided by histidine 110, histidine 113, aspartate 120, aspartate 147, histidine 150, and histidine 211. Positions 225 to 274 are disordered; sequence DQPLPPPGDGCGAELQSWFEPPKPGTTKPEKKTPPPLPPSCQALLDEHVL.

It belongs to the peptidase M74 family. In terms of assembly, dimer. Zn(2+) is required as a cofactor.

It is found in the periplasm. Functionally, murein endopeptidase that cleaves the D-alanyl-meso-2,6-diamino-pimelyl amide bond that connects peptidoglycan strands. Likely plays a role in the removal of murein from the sacculus. This Salmonella agona (strain SL483) protein is Penicillin-insensitive murein endopeptidase.